The following is a 518-amino-acid chain: Metal transporter Nramp1 (518 aa).

The next 12 helical transmembrane spans lie at F35–M55, E68–A88, P107–I127, I131–I151, V172–V192, I218–L238, F255–I275, S315–A337, L357–S377, L382–L402, I418–F438, and V458–L478.

The protein belongs to the NRAMP (TC 2.A.55) family.

It is found in the membrane. Probable metal transporter that may participate in the control of iron homeostasis. The polypeptide is Metal transporter Nramp1 (NRAMP1) (Oryza sativa subsp. japonica (Rice)).